The chain runs to 227 residues: A-type potassium channel modulatory protein KCNIP1 (227 aa).

Positions 38 to 94 (LEMTMVCHRPEGLEQLEAQTNFTKRELQVLYRGFKNECPSGVVNEETFKQIYAQFFP) constitute an EF-hand 1; degenerate domain. 3 consecutive EF-hand domains span residues 97 to 132 (DAST…LLRG), 133 to 168 (TVHE…IYDM), and 181 to 216 (TPRQ…DDNI). 9 residues coordinate Ca(2+): Asp-146, Asn-148, Asp-150, Tyr-152, Glu-157, Asp-194, Asn-196, Asp-198, and Glu-205. Residues 214–227 (DNIMRSLQLFQNVM) form an interaction with KCND2 region.

It belongs to the recoverin family. Component of heteromultimeric potassium channels. Identified in potassium channel complexes containing KCND1, KCND2, KCND3, KCNIP1, KCNIP2, KCNIP3, KCNIP4, DPP6 and DPP10. Part of a heterooctamer composed of the tetrameric channel and four KCNIP1 chains. Probably part of a complex consisting of KCNIP1, KCNIP2 isoform 3 and KCND2. Self-associates to form homodimers and homotetramers. Interacts with KCNIP2 isoform 3 in a calcium-dependent manner. Interacts with KCND2; this interaction mediates the capture of both the N- and C-terminus of KCND2, thus preventing KCND2 N-type inactivation and modulates the channel gating kinetics. Interacts with KCND3; each KCNIP1 monomer interacts with two adjacent KCND3 subunits, through both the N-terminal inactivation ball of a KCND3 subunit and a C-terminal helix from the adjacent KCND3 subunit, clamping them together; this interaction stabilizes the tetrameric form and modulates the channel gating kinetics namely channel activation and inactivation kinetics and rate of recovery from inactivation. In terms of tissue distribution, detected in hippocampus and in the molecular layer of the dentate gyrus (at protein level). Isoform 1 and isoform 2 are predominantly expressed at equal levels in brain. Colocalizes with KCND3 in inhibitory interneurons in cortex and hippocampus and in striatal interneurons.

Its subcellular location is the cell membrane. It is found in the cytoplasm. The protein localises to the cell projection. It localises to the dendrite. Regulatory subunit of Kv4/D (Shal)-type voltage-gated rapidly inactivating A-type potassium channels. Regulates channel density, inactivation kinetics and rate of recovery from inactivation in a calcium-dependent and isoform-specific manner. Modulates KCND2/Kv4.2 currents. In vitro, modulates KCND1/Kv4.1 currents. Increases the presence of KCND2 at the cell surface. The sequence is that of A-type potassium channel modulatory protein KCNIP1 from Rattus norvegicus (Rat).